We begin with the raw amino-acid sequence, 557 residues long: Membrane protein insertase YidC (557 aa).

A run of 3 helical transmembrane segments spans residues 371–391 (WGWSIILLTILIKLVFFPLSA), 437–457 (LGGCLPVVIQIPVFISLYWVL), and 515–535 (PIVFSVMFFFFPAGLVLYWVV).

It belongs to the OXA1/ALB3/YidC family. Type 1 subfamily. In terms of assembly, interacts with the Sec translocase complex via SecD. Specifically interacts with transmembrane segments of nascent integral membrane proteins during membrane integration.

The protein resides in the cell inner membrane. Its function is as follows. Required for the insertion and/or proper folding and/or complex formation of integral membrane proteins into the membrane. Involved in integration of membrane proteins that insert both dependently and independently of the Sec translocase complex, as well as at least some lipoproteins. Aids folding of multispanning membrane proteins. The sequence is that of Membrane protein insertase YidC from Polynucleobacter necessarius subsp. necessarius (strain STIR1).